The following is a 486-amino-acid chain: 2-isopropylmalate synthase (486 aa).

A Pyruvate carboxyltransferase domain is found at 4-266 (VYIFDTTLRD…KTDVNLKEIA (263 aa)). Residues Asp13, His201, His203, and Asn237 each coordinate Mn(2+). Residues 390–486 (KVEIIHVTSG…LSTDIIEASA (97 aa)) are regulatory domain.

The protein belongs to the alpha-IPM synthase/homocitrate synthase family. LeuA type 1 subfamily. Mn(2+) is required as a cofactor.

It localises to the cytoplasm. The catalysed reaction is 3-methyl-2-oxobutanoate + acetyl-CoA + H2O = (2S)-2-isopropylmalate + CoA + H(+). Its pathway is amino-acid biosynthesis; L-leucine biosynthesis; L-leucine from 3-methyl-2-oxobutanoate: step 1/4. In terms of biological role, catalyzes the condensation of the acetyl group of acetyl-CoA with 3-methyl-2-oxobutanoate (2-ketoisovalerate) to form 3-carboxy-3-hydroxy-4-methylpentanoate (2-isopropylmalate). The sequence is that of 2-isopropylmalate synthase from Pyrococcus abyssi (strain GE5 / Orsay).